The sequence spans 377 residues: Phospho-N-acetylmuramoyl-pentapeptide-transferase (377 aa).

Helical transmembrane passes span 9 to 29 (YITLRAVLACATALLIGLVAG), 59 to 79 (TPTMGGALILIAIAISTLLWA), 85 to 105 (FVWVVLLVTFGFGWIGWMDDY), 122 to 142 (FFWQATIGLVAAVYLAFAVSA), 155 to 175 (WVGSGFTMPLPTRADLIVPFF), 178 to 198 (VSYPLGVLGFVALTWAVIVGT), 210 to 230 (GLAIMPTVMVGSALGIFAYVV), 247 to 267 (AAELMVLCAAIGGAGLAFLWF), 274 to 294 (VFMGDVGALALGGALGTIAVI), 299 to 319 (IVLFIMGGVFVVETLSVMVQV), and 354 to 374 (QVVVRFWIITMMLVLVGLSTL).

It belongs to the glycosyltransferase 4 family. MraY subfamily. It depends on Mg(2+) as a cofactor.

It localises to the cell inner membrane. It carries out the reaction UDP-N-acetyl-alpha-D-muramoyl-L-alanyl-gamma-D-glutamyl-meso-2,6-diaminopimeloyl-D-alanyl-D-alanine + di-trans,octa-cis-undecaprenyl phosphate = di-trans,octa-cis-undecaprenyl diphospho-N-acetyl-alpha-D-muramoyl-L-alanyl-D-glutamyl-meso-2,6-diaminopimeloyl-D-alanyl-D-alanine + UMP. Its pathway is cell wall biogenesis; peptidoglycan biosynthesis. Catalyzes the initial step of the lipid cycle reactions in the biosynthesis of the cell wall peptidoglycan: transfers peptidoglycan precursor phospho-MurNAc-pentapeptide from UDP-MurNAc-pentapeptide onto the lipid carrier undecaprenyl phosphate, yielding undecaprenyl-pyrophosphoryl-MurNAc-pentapeptide, known as lipid I. The sequence is that of Phospho-N-acetylmuramoyl-pentapeptide-transferase from Bordetella bronchiseptica (strain ATCC BAA-588 / NCTC 13252 / RB50) (Alcaligenes bronchisepticus).